Here is a 361-residue protein sequence, read N- to C-terminus: Peptide chain release factor 1 (361 aa).

An N5-methylglutamine modification is found at Q235.

It belongs to the prokaryotic/mitochondrial release factor family. In terms of processing, methylated by PrmC. Methylation increases the termination efficiency of RF1.

Its subcellular location is the cytoplasm. Peptide chain release factor 1 directs the termination of translation in response to the peptide chain termination codons UAG and UAA. The polypeptide is Peptide chain release factor 1 (Rhodopseudomonas palustris (strain ATCC BAA-98 / CGA009)).